The following is a 445-amino-acid chain: Chromosome partition protein MukF (445 aa).

Residues 213–241 (LSETSATLRELQDTLQAAGDELQTQILDI) form a leucine-zipper region.

Belongs to the MukF family. As to quaternary structure, interacts, and probably forms a ternary complex, with MukE and MukB via its C-terminal region. The complex formation is stimulated by calcium or magnesium. It is required for an interaction between MukE and MukB.

It is found in the cytoplasm. Its subcellular location is the nucleoid. Its function is as follows. Involved in chromosome condensation, segregation and cell cycle progression. May participate in facilitating chromosome segregation by condensation DNA from both sides of a centrally located replisome during cell division. Not required for mini-F plasmid partitioning. Probably acts via its interaction with MukB and MukE. Overexpression results in anucleate cells. It has a calcium binding activity. This chain is Chromosome partition protein MukF, found in Vibrio cholerae serotype O1 (strain ATCC 39315 / El Tor Inaba N16961).